A 182-amino-acid chain; its full sequence is Ribulose bisphosphate carboxylase small subunit, chloroplastic (182 aa).

Residues 1–58 (MASSMISSATVATVSRATPAQATMVAPFTGLKSTAAFPATRKSNNDITSLASNGGRVQ) constitute a chloroplast transit peptide.

Belongs to the RuBisCO small chain family. In terms of assembly, heterohexadecamer of 8 large and 8 small subunits.

It localises to the plastid. The protein localises to the chloroplast. Functionally, ruBisCO catalyzes two reactions: the carboxylation of D-ribulose 1,5-bisphosphate, the primary event in carbon dioxide fixation, as well as the oxidative fragmentation of the pentose substrate. Both reactions occur simultaneously and in competition at the same active site. Although the small subunit is not catalytic it is essential for maximal activity. This chain is Ribulose bisphosphate carboxylase small subunit, chloroplastic, found in Fagus crenata (Japanese beech).